The chain runs to 563 residues: Coiled-coil domain-containing protein 63 (563 aa).

Residues 1–29 are disordered; it reads MSVLKKNRRKDSDTPQEPSEKAKEQQAEA. The span at 10–29 shows a compositional bias: basic and acidic residues; sequence KDSDTPQEPSEKAKEQQAEA. Coiled coils occupy residues 18-201, 233-291, and 341-422; these read PSEK…QLQH, AMKD…AKKH, and TELN…KKIN.

In terms of biological role, plays a role in spermiogenesis. Involved in the elongation of flagella and the formation of sperm heads. In Homo sapiens (Human), this protein is Coiled-coil domain-containing protein 63.